We begin with the raw amino-acid sequence, 186 residues long: ATP synthase subunit delta (186 aa).

Belongs to the ATPase delta chain family. F-type ATPases have 2 components, F(1) - the catalytic core - and F(0) - the membrane proton channel. F(1) has five subunits: alpha(3), beta(3), gamma(1), delta(1), epsilon(1). F(0) has three main subunits: a(1), b(2) and c(10-14). The alpha and beta chains form an alternating ring which encloses part of the gamma chain. F(1) is attached to F(0) by a central stalk formed by the gamma and epsilon chains, while a peripheral stalk is formed by the delta and b chains.

It is found in the cell inner membrane. F(1)F(0) ATP synthase produces ATP from ADP in the presence of a proton or sodium gradient. F-type ATPases consist of two structural domains, F(1) containing the extramembraneous catalytic core and F(0) containing the membrane proton channel, linked together by a central stalk and a peripheral stalk. During catalysis, ATP synthesis in the catalytic domain of F(1) is coupled via a rotary mechanism of the central stalk subunits to proton translocation. In terms of biological role, this protein is part of the stalk that links CF(0) to CF(1). It either transmits conformational changes from CF(0) to CF(1) or is implicated in proton conduction. The protein is ATP synthase subunit delta of Brucella canis (strain ATCC 23365 / NCTC 10854 / RM-666).